The sequence spans 293 residues: Small ribosomal subunit biogenesis GTPase RsgA (293 aa).

Residues 63-223 enclose the CP-type G domain; that stretch reads QNELVRPPVA…VADTPGFSAL (161 aa). GTP contacts are provided by residues 112-115 and 166-174; these read SKID and GQSGVGKSS. Zn(2+) contacts are provided by Cys-247, Cys-252, His-254, and Cys-260.

It belongs to the TRAFAC class YlqF/YawG GTPase family. RsgA subfamily. As to quaternary structure, monomer. Associates with 30S ribosomal subunit, binds 16S rRNA. Requires Zn(2+) as cofactor.

It localises to the cytoplasm. Its function is as follows. One of several proteins that assist in the late maturation steps of the functional core of the 30S ribosomal subunit. Helps release RbfA from mature subunits. May play a role in the assembly of ribosomal proteins into the subunit. Circularly permuted GTPase that catalyzes slow GTP hydrolysis, GTPase activity is stimulated by the 30S ribosomal subunit. This chain is Small ribosomal subunit biogenesis GTPase RsgA, found in Geobacillus thermodenitrificans (strain NG80-2).